The following is a 1495-amino-acid chain: MRRNQLPTPAFLLLFLLLPRDATTATAKPQYVVLVPSEVYSGVPEKACVSLNHVNETVMLSLTLEYAMQQTKLLTDQAVDKDSFYCSPFTISGSPLPYTFITVEIKGPTQRFIKKKSIQIIKAESPVFVQTDKPIYKPGQIVKFRVVSVDISFRPLNETFPVVYIETPKRNRIFQWQNIHLAGGLHQLSFPLSVEPALGIYKVVVQKDSGKKIEHSFEVKEYVLPKFEVIIKMQKTMAFLEEELPITACGVYTYGKPVPGLVTLRVCRKYSRYRSTCHNQNSMSICEEFSQQADDKGCFRQVVKTKVFQLRQKGHDMKIEVEAKIKEEGTGIELTGIGSCEIANALSKLKFTKVNTNYRPGLPFSGQVLLVDEKGKPIPNKNITSVVSPLGYLSIFTTDEHGLANISIDTSNFTAPFLRVVVTYKQNHVCYDNWWLDEFHTQADHSATLVFSPSQSYIQLELVFGTLACGQTQEIRIHYLLNEDIMKNEKDLTFYYLIKARGSIFNLGSHVLSLEQGNMKGVFSLPIQVEPGMAPEAQLLIYAILPNEELVADAQNFEIEKCFANKVNLSFPSAQSLPASDTHLKVKAAPLSLCALTAVDQSVLLLKPEAKLSPQSIYNLLPGKTVQGAFFGVPVYKDHENCISGEDITHNGIVYTPKHSLGDNDAHSIFQSVGINIFTNSKIHKPRFCQEFQHYPAMGGVAPQALAVAASGPGSSFRAMGVPMMGLDYSDEINQVVEVRETVRKYFPETWIWDLVPLDVSGDGELAVKVPDTITEWKASAFCLSGTTGLGLSSTISLQAFQPFFLELTLPYSVVRGEAFTLKATVLNYMSHCIQIRVDLEISPDFLAVPVGGHENSHCICGNERKTVSWAVTPKSLGEVNFTATAEALQSPELCGNKLTEVPALVHKDTVVKSVIVEPEGIEKEQTYNTLLCPQDTELQDNWSLELPPNVVEGSARATHSVLGDILGSAMQNLQNLLQMPYGCGEQNMVLFVPNIYVLNYLNETQQLTEAIKSKAINYLISGYQRQLNYQHSDGSYSTFGNHGGGNTPGNTWLTAFVLKAFAQAQSHIFIEKTHITNAFNWLSMKQKENGCFQQSGYLLNNAMKGGVDDEVTLSAYITIALLEMPLPVTHSAVRNALFCLETAWASISQSQESHVYTKALLAYAFALAGNKAKRSELLESLNKDAVKEEDSLHWQRPGDVQKVKALSFYQPRAPSAEVEMTAYVLLAYLTSESSRPTRDLSSSDLSTASKIVKWISKQQNSHGGFSSTQDTVVALQALSKYGAATFTRSQKEVLVTIESSGTFSKTFHVNSGNRLLLQEVRLPDLPGNYVTKGSGSGCVYLQTSLKYNILPVADGKAPFALQVNTLPLNFDKAGDHRTFQIRINVSYTGERPSSNMVIVDVKMVSGFIPMKPSVKKLQDQPNIQRTEVNTNHVLIYIEKLTNQTLGFSFAVEQDIPVKNLKPAPIKVYDYYETDEFTVEEYSAPFSDGSEQGNA.

A signal peptide spans 1-24; sequence MRRNQLPTPAFLLLFLLLPRDATT. Cysteine 48 and cysteine 86 are oxidised to a cystine. Asparagine 55 and asparagine 157 each carry an N-linked (GlcNAc...) asparagine glycan. 2 disulfide bridges follow: cysteine 249/cysteine 298 and cysteine 267/cysteine 286. N-linked (GlcNAc...) asparagine glycosylation is found at asparagine 382, asparagine 405, and asparagine 412. Cysteine 469 and cysteine 562 form a disulfide bridge. N-linked (GlcNAc...) asparagine glycosylation is present at asparagine 568. Cystine bridges form between cysteine 594-cysteine 783, cysteine 642-cysteine 689, cysteine 833-cysteine 861, cysteine 859-cysteine 895, cysteine 933-cysteine 1339, and cysteine 1092-cysteine 1140. Residues 686-744 form a bait region region; sequence PRFCQEFQHYPAMGGVAPQALAVAASGPGSSFRAMGVPMMGLDYSDEINQVVEVRETVR. N-linked (GlcNAc...) asparagine glycosylation is found at asparagine 881 and asparagine 942. Positions 984–987 form a cross-link, isoglutamyl cysteine thioester (Cys-Gln); sequence CGEQ. Residue asparagine 1003 is glycosylated (N-linked (GlcNAc...) asparagine). N-linked (GlcNAc...) asparagine glycans are attached at residues asparagine 1385 and asparagine 1443.

The protein belongs to the protease inhibitor I39 (alpha-2-macroglobulin) family. Highest expression in liver, medium expression in ovary, heart and stomach. Low expression in lung, kidney and uterus. Protein found in plasma.

It localises to the secreted. Functionally, is able to inhibit all four classes of proteinases by a unique 'trapping' mechanism. This protein has a peptide stretch, called the 'bait region' which contains specific cleavage sites for different proteinases. When a proteinase cleaves the bait region, a conformational change is induced in the protein which traps the proteinase. The entrapped enzyme remains active against low molecular weight substrates (activity against high molecular weight substrates is greatly reduced). Following cleavage in the bait region, a thioester bond is hydrolyzed and mediates the covalent binding of the protein to the proteinase. The chain is Pregnancy zone protein (Pzp) from Mus musculus (Mouse).